A 191-amino-acid chain; its full sequence is uncharacterized protein (191 aa).

This is an uncharacterized protein from Schizosaccharomyces pombe (strain 972 / ATCC 24843) (Fission yeast).